Here is a 373-residue protein sequence, read N- to C-terminus: 3 beta-hydroxysteroid dehydrogenase/Delta 5--&gt;4-isomerase type 4 (373 aa).

Catalysis depends on Tyr-155, which acts as the Proton acceptor. Lys-159 is an NAD(+) binding site. Residues 288 to 308 traverse the membrane as a helical segment; the sequence is LPLLYWLAFLLEIVSFFLHPV. At Lys-350 the chain carries N6-acetyllysine.

This sequence belongs to the 3-beta-HSD family. As to expression, skin, placenta, also detectable in ovary and adrenal gland.

It localises to the endoplasmic reticulum membrane. Its subcellular location is the mitochondrion membrane. It carries out the reaction a 3beta-hydroxy-Delta(5)-steroid + NAD(+) = a 3-oxo-Delta(5)-steroid + NADH + H(+). The catalysed reaction is a 3-oxo-Delta(5)-steroid = a 3-oxo-Delta(4)-steroid. It participates in lipid metabolism; steroid biosynthesis. 3-beta-HSD is a bifunctional enzyme, that catalyzes the oxidative conversion of Delta(5)-ene-3-beta-hydroxy steroid, and the oxidative conversion of ketosteroids. The 3-beta-HSD enzymatic system plays a crucial role in the biosynthesis of all classes of hormonal steroids. The protein is 3 beta-hydroxysteroid dehydrogenase/Delta 5--&gt;4-isomerase type 4 (Hsd3b6) of Rattus norvegicus (Rat).